The following is a 432-amino-acid chain: D-amino acid dehydrogenase (432 aa).

3–17 (VVILGSGVVGVTSAW) contributes to the FAD binding site.

This sequence belongs to the DadA oxidoreductase family. The cofactor is FAD.

It catalyses the reaction a D-alpha-amino acid + A + H2O = a 2-oxocarboxylate + AH2 + NH4(+). Its pathway is amino-acid degradation; D-alanine degradation; NH(3) and pyruvate from D-alanine: step 1/1. In terms of biological role, oxidative deamination of D-amino acids. The chain is D-amino acid dehydrogenase from Citrobacter koseri (strain ATCC BAA-895 / CDC 4225-83 / SGSC4696).